A 723-amino-acid chain; its full sequence is Malate synthase G (723 aa).

Acetyl-CoA is bound by residues Val-118, 125-126 (RY), Ser-274, and Arg-311. The active-site Proton acceptor is the Arg-338. Glyoxylate-binding positions include Arg-338, Glu-427, and 452–455 (GFLD). Mg(2+) contacts are provided by Glu-427 and Asp-455. Pro-536 serves as a coordination point for acetyl-CoA. At Cys-617 the chain carries Cysteine sulfenic acid (-SOH). Asp-631 functions as the Proton donor in the catalytic mechanism. Cys-688 bears the Cysteine sulfenic acid (-SOH) mark.

It belongs to the malate synthase family. GlcB subfamily. As to quaternary structure, monomer. Mg(2+) serves as cofactor.

The protein resides in the cytoplasm. It catalyses the reaction glyoxylate + acetyl-CoA + H2O = (S)-malate + CoA + H(+). Its pathway is carbohydrate metabolism; glyoxylate cycle; (S)-malate from isocitrate: step 2/2. Its function is as follows. Involved in the glycolate utilization. Catalyzes the condensation and subsequent hydrolysis of acetyl-coenzyme A (acetyl-CoA) and glyoxylate to form malate and CoA. This Escherichia coli O6:H1 (strain CFT073 / ATCC 700928 / UPEC) protein is Malate synthase G.